Consider the following 94-residue polypeptide: Probable Fe(2+)-trafficking protein (94 aa).

The protein belongs to the Fe(2+)-trafficking protein family.

Its function is as follows. Could be a mediator in iron transactions between iron acquisition and iron-requiring processes, such as synthesis and/or repair of Fe-S clusters in biosynthetic enzymes. This chain is Probable Fe(2+)-trafficking protein, found in Alcanivorax borkumensis (strain ATCC 700651 / DSM 11573 / NCIMB 13689 / SK2).